The following is a 142-amino-acid chain: Ribosome-binding factor A (142 aa).

The protein belongs to the RbfA family. In terms of assembly, monomer. Binds 30S ribosomal subunits, but not 50S ribosomal subunits or 70S ribosomes.

It is found in the cytoplasm. Functionally, one of several proteins that assist in the late maturation steps of the functional core of the 30S ribosomal subunit. Associates with free 30S ribosomal subunits (but not with 30S subunits that are part of 70S ribosomes or polysomes). Required for efficient processing of 16S rRNA. May interact with the 5'-terminal helix region of 16S rRNA. This Leifsonia xyli subsp. xyli (strain CTCB07) protein is Ribosome-binding factor A.